Reading from the N-terminus, the 63-residue chain is Small ribosomal subunit protein eS31 (63 aa).

Cys34, Cys37, Cys53, and Cys56 together coordinate Zn(2+). A C4-type zinc finger spans residues 34 to 56; the sequence is CPKCGSVMAFHREPVPRWHCGKC.

Belongs to the eukaryotic ribosomal protein eS31 family. As to quaternary structure, part of the 30S ribosomal subunit. The cofactor is Zn(2+).

The chain is Small ribosomal subunit protein eS31 from Pyrobaculum neutrophilum (strain DSM 2338 / JCM 9278 / NBRC 100436 / V24Sta) (Thermoproteus neutrophilus).